Consider the following 977-residue polypeptide: MSRRPDLLRGSVVATVAATFLLFIFPPNVESTVEKQALFRFKNRLDDSHNILQSWKPSDSPCVFRGITCDPLSGEVIGISLGNVNLSGTISPSISALTKLSTLSLPSNFISGRIPPEIVNCKNLKVLNLTSNRLSGTIPNLSPLKSLEILDISGNFLNGEFQSWIGNMNQLVSLGLGNNHYEEGIIPESIGGLKKLTWLFLARSNLTGKIPNSIFDLNALDTFDIANNAISDDFPILISRLVNLTKIELFNNSLTGKIPPEIKNLTRLREFDISSNQLSGVLPEELGVLKELRVFHCHENNFTGEFPSGFGDLSHLTSLSIYRNNFSGEFPVNIGRFSPLDTVDISENEFTGPFPRFLCQNKKLQFLLALQNEFSGEIPRSYGECKSLLRLRINNNRLSGQVVEGFWSLPLAKMIDLSDNELTGEVSPQIGLSTELSQLILQNNRFSGKIPRELGRLTNIERIYLSNNNLSGEIPMEVGDLKELSSLHLENNSLTGFIPKELKNCVKLVDLNLAKNFLTGEIPNSLSQIASLNSLDFSGNRLTGEIPASLVKLKLSFIDLSGNQLSGRIPPDLLAVGGSTAFSRNEKLCVDKENAKTNQNLGLSICSGYQNVKRNSSLDGTLLFLALAIVVVVLVSGLFALRYRVVKIRELDSENRDINKADAKWKIASFHQMELDVDEICRLDEDHVIGSGSAGKVYRVDLKKGGGTVAVKWLKRGGGEEGDGTEVSVAEMEILGKIRHRNVLKLYACLVGRGSRYLVFEFMENGNLYQALGNNIKGGLPELDWLKRYKIAVGAAKGIAYLHHDCCPPIIHRDIKSSNILLDGDYESKIADFGVAKVADKGYEWSCVAGTHGYMAPELAYSFKATEKSDVYSFGVVLLELVTGLRPMEDEFGEGKDIVDYVYSQIQQDPRNLQNVLDKQVLSTYIEESMIRVLKMGLLCTTKLPNLRPSMREVVRKLDDADPCVSNSQDTTGKITV.

The N-terminal stretch at 1 to 31 (MSRRPDLLRGSVVATVAATFLLFIFPPNVES) is a signal peptide. Residues 32 to 620 (TVEKQALFRF…NVKRNSSLDG (589 aa)) are Extracellular-facing. An N-linked (GlcNAc...) asparagine glycan is attached at asparagine 85. LRR repeat units follow at residues 97 to 121 (LTKL…IVNC), 122 to 146 (KNLK…PLKS), 148 to 167 (EILD…WIGN), 168 to 192 (MNQL…SIGG), 193 to 217 (LKKL…IFDL), 219 to 241 (ALDT…ISRL), 242 to 265 (VNLT…IKNL), 266 to 288 (TRLR…ELGV), 290 to 312 (KELR…GFGD), 313 to 338 (LSHL…GRFS), 340 to 361 (LDTV…LCQN), 363 to 385 (KLQF…YGEC), 386 to 409 (KSLL…FWSL), 411 to 433 (LAKM…IGLS), 434 to 457 (TELS…LGRL), 458 to 481 (TNIE…VGDL), 482 to 504 (KELS…ELKN), 506 to 529 (VKLV…LSQI), 530 to 553 (ASLN…LVKL), and 555 to 576 (LSFI…LLAV). An N-linked (GlcNAc...) asparagine glycan is attached at asparagine 128. A glycan (N-linked (GlcNAc...) asparagine) is linked at asparagine 205. N-linked (GlcNAc...) asparagine glycosylation is found at asparagine 243, asparagine 251, and asparagine 264. Asparagine 301 and asparagine 325 each carry an N-linked (GlcNAc...) asparagine glycan. 2 N-linked (GlcNAc...) asparagine glycosylation sites follow: asparagine 469 and asparagine 491. An N-linked (GlcNAc...) asparagine glycan is attached at asparagine 615. The chain crosses the membrane as a helical span at residues 621-641 (TLLFLALAIVVVVLVSGLFAL). The Cytoplasmic portion of the chain corresponds to 642-977 (RYRVVKIREL…SQDTTGKITV (336 aa)). In terms of domain architecture, Protein kinase spans 683–965 (LDEDHVIGSG…RKLDDADPCV (283 aa)). ATP is bound by residues 689 to 697 (IGSGSAGKV) and lysine 712. Tyrosine 801 is subject to Phosphotyrosine. The Proton acceptor role is filled by aspartate 814. Position 846 is a phosphoserine (serine 846). A phosphotyrosine mark is found at tyrosine 854 and tyrosine 861.

The protein belongs to the protein kinase superfamily. Ser/Thr protein kinase family. Interacts with the root-derived peptide CEP1. Binds to the ammonium transporter AMT1-1. Expressed in mature leaves, primary roots, and the root tips of both primary and lateral roots.

It localises to the cell membrane. The enzyme catalyses L-tyrosyl-[protein] + ATP = O-phospho-L-tyrosyl-[protein] + ADP + H(+). In terms of biological role, receptor kinase involved in the perception of C-terminally encoded plant signaling peptide (CEP) and subsequent regulation of root and shoot development. Together with CEPR1, mediates systemic nitrogen (N)-demand signaling upon the perception of root-derived peptides (e.g. CEP1) via the up-regulation of genes involved in N uptake and assimilation pathways. In Arabidopsis thaliana (Mouse-ear cress), this protein is Receptor protein-tyrosine kinase CEPR2.